The chain runs to 217 residues: GTP cyclohydrolase 1 (217 aa).

Zn(2+) is bound by residues C109, H112, and C180.

Belongs to the GTP cyclohydrolase I family. As to quaternary structure, toroid-shaped homodecamer, composed of two pentamers of five dimers.

It catalyses the reaction GTP + H2O = 7,8-dihydroneopterin 3'-triphosphate + formate + H(+). It functions in the pathway cofactor biosynthesis; 7,8-dihydroneopterin triphosphate biosynthesis; 7,8-dihydroneopterin triphosphate from GTP: step 1/1. In Vibrio vulnificus (strain CMCP6), this protein is GTP cyclohydrolase 1.